Consider the following 145-residue polypeptide: D-aminoacyl-tRNA deacylase (145 aa).

Residues 137 to 138 (GP) carry the Gly-cisPro motif, important for rejection of L-amino acids motif.

Belongs to the DTD family. Homodimer.

It localises to the cytoplasm. The catalysed reaction is glycyl-tRNA(Ala) + H2O = tRNA(Ala) + glycine + H(+). The enzyme catalyses a D-aminoacyl-tRNA + H2O = a tRNA + a D-alpha-amino acid + H(+). An aminoacyl-tRNA editing enzyme that deacylates mischarged D-aminoacyl-tRNAs. Also deacylates mischarged glycyl-tRNA(Ala), protecting cells against glycine mischarging by AlaRS. Acts via tRNA-based rather than protein-based catalysis; rejects L-amino acids rather than detecting D-amino acids in the active site. By recycling D-aminoacyl-tRNA to D-amino acids and free tRNA molecules, this enzyme counteracts the toxicity associated with the formation of D-aminoacyl-tRNA entities in vivo and helps enforce protein L-homochirality. The sequence is that of D-aminoacyl-tRNA deacylase from Dichelobacter nodosus (strain VCS1703A).